The chain runs to 404 residues: Triose phosphate/phosphate translocator, chloroplastic (404 aa).

The transit peptide at 1–74 directs the protein to the chloroplast; sequence MESRVLSRTT…GPVCSRREKT (74 aa). At 75–98 the chain is on the chloroplast intermembrane side; that stretch reads AVQPCRAASGSSGEAKTGFLEKYP. Residues 99-119 form a helical membrane-spanning segment; that stretch reads ALVTGSFFFMWYFLNVIFNIL. Residues 120-131 are Lumenal-facing; sequence NKKIYNYFPYPY. The chain crosses the membrane as a helical span at residues 132-152; sequence FVSVIHLFVGVVYCLASWSVG. The Chloroplast intermembrane segment spans residues 153–209; it reads LPKRAPMDSKLLKLLIPVAVCHAIGHVTSNVSFAAVAVSFTHTIKALEPFFNAAASQ. Residues 210 to 230 form a helical membrane-spanning segment; the sequence is FVLGQSIPITLWLSLAPVVIG. Over 231–274 the chain is Lumenal; sequence VSMASLTELSFNWLGFISAMISNVSFTYRSLYSKKAMTDMDSTN. A helical membrane pass occupies residues 275–294; sequence IYAYISIIALFVCLPPAIIV. Topologically, residues 295–372 are chloroplast intermembrane; the sequence is EGPQLMKHGF…IAFGNKISTQ (78 aa). A helical membrane pass occupies residues 373-393; the sequence is TAIGTSIAIAGVALYSLIKAK. Topologically, residues 394 to 404 are lumenal; the sequence is MEEEKRQMKST.

This sequence belongs to the TPT transporter family. TPT (TC 2.A.7.9) subfamily. The N-terminus is blocked.

The protein localises to the plastid. It is found in the chloroplast membrane. Its function is as follows. Mediates the export of fixed carbons from the chloroplasts into the cytosol in the form of triose phosphates. The polypeptide is Triose phosphate/phosphate translocator, chloroplastic (Spinacia oleracea (Spinach)).